The primary structure comprises 203 residues: Small ribosomal subunit protein uS3 (203 aa).

One can recognise a KH type-2 domain in the interval 39 to 113 (IREIIRRNFL…NHVLNAKNIA (75 aa)).

The protein belongs to the universal ribosomal protein uS3 family. As to quaternary structure, part of the 30S ribosomal subunit. Forms a tight complex with proteins S10 and S14.

Functionally, binds the lower part of the 30S subunit head. Binds mRNA in the 70S ribosome, positioning it for translation. This Carsonella ruddii protein is Small ribosomal subunit protein uS3.